We begin with the raw amino-acid sequence, 86 residues long: RNA-binding protein Hfq (86 aa).

A Sm domain is found at 9–68 (DPYLNTLRKEKVPVSIYLVNGIKLQGQIESFDQFVVLLKNTVSQMVYKHAISTVVPARPV). Residues 66 to 86 (RPVRLPSPSDAEHGDSEPGNA) are disordered. The segment covering 75-86 (DAEHGDSEPGNA) has biased composition (basic and acidic residues).

Belongs to the Hfq family. In terms of assembly, homohexamer.

Functionally, RNA chaperone that binds small regulatory RNA (sRNAs) and mRNAs to facilitate mRNA translational regulation in response to envelope stress, environmental stress and changes in metabolite concentrations. Also binds with high specificity to tRNAs. The chain is RNA-binding protein Hfq from Pseudomonas entomophila (strain L48).